The following is a 405-amino-acid chain: Cytoplasmic polyadenylated homeobox-like protein (405 aa).

Disordered stretches follow at residues 1-33 and 340-363; these read MNLDGTSGGFPAEEDHHNEERQTKNKRKTKHRH and PWDLGKQWSSAQSQLQSQLPQNNG. Residues 13–23 are compositionally biased toward basic and acidic residues; it reads EEDHHNEERQT. The segment covering 24–33 has biased composition (basic residues); it reads KNKRKTKHRH. A DNA-binding region (homeobox) is located at residues 28 to 87; that stretch reads KTKHRHKFSEELLQELKEIFGENCYPDYTTRKTLAIKFDCPVNVIDNWFQNKRARLPPAE. The segment covering 346-360 has biased composition (low complexity); the sequence is QWSSAQSQLQSQLPQ.

It localises to the nucleus. In terms of biological role, transcription factor that acts as activator. The protein is Cytoplasmic polyadenylated homeobox-like protein of Homo sapiens (Human).